A 419-amino-acid chain; its full sequence is L-rhamnose isomerase (419 aa).

Positions 262, 294, and 296 each coordinate Mn(2+).

It belongs to the rhamnose isomerase family. As to quaternary structure, homotetramer. The cofactor is Mn(2+).

It localises to the cytoplasm. It catalyses the reaction L-rhamnopyranose = L-rhamnulose. It functions in the pathway carbohydrate degradation; L-rhamnose degradation; glycerone phosphate from L-rhamnose: step 1/3. Functionally, catalyzes the interconversion of L-rhamnose and L-rhamnulose. This is L-rhamnose isomerase from Citrobacter koseri (strain ATCC BAA-895 / CDC 4225-83 / SGSC4696).